Consider the following 152-residue polypeptide: Deoxyuridine 5'-triphosphate nucleotidohydrolase (152 aa).

Residues 72–74 (RSG), Asn-85, and 89–91 (TID) each bind substrate.

This sequence belongs to the dUTPase family. It depends on Mg(2+) as a cofactor.

It carries out the reaction dUTP + H2O = dUMP + diphosphate + H(+). The protein operates within pyrimidine metabolism; dUMP biosynthesis; dUMP from dCTP (dUTP route): step 2/2. Functionally, this enzyme is involved in nucleotide metabolism: it produces dUMP, the immediate precursor of thymidine nucleotides and it decreases the intracellular concentration of dUTP so that uracil cannot be incorporated into DNA. This is Deoxyuridine 5'-triphosphate nucleotidohydrolase from Rhodopseudomonas palustris (strain HaA2).